The primary structure comprises 348 residues: MNRSSFDLLSTVEYGGCSAKLDPAKLSELLHDIPLPVDSRIMVDVSTHDDAGVYRLNDDTALIVTTDFFPPVCSDPYTFGRIAAANALSDVYAMGGRPLLVLNLTMFPSEGIPVEVLADILRGGQQTIDESGAFTMGGHTIDDPIPKYGLAVTGIVHPEHLVTNAGVRAGQCLVLTKPLGIGVAMAAHRLGLIGSEVYEAAIGQMCLLNRAGAELMQKYGIRGATDITGFGLLGHAKELAEASDVCLHIDSRSVPVLPECLSLLRDGCIPGATFRNLRFVGDMLRADCPTEYKMLLADAQTSGGLLMAVDADRAEDLVADLHRTGLHPFAAIIGYATDAEDAAKLIVT.

Cys17 is an active-site residue. Residues Lys20 and 47-49 (THD) contribute to the ATP site. Position 50 (Asp50) interacts with Mg(2+). ATP is bound by residues Asp67, Asp90, and 138 to 140 (GHT). Position 90 (Asp90) interacts with Mg(2+). Asp226 contacts Mg(2+).

This sequence belongs to the selenophosphate synthase 1 family. Class I subfamily. In terms of assembly, homodimer. Mg(2+) serves as cofactor.

It catalyses the reaction hydrogenselenide + ATP + H2O = selenophosphate + AMP + phosphate + 2 H(+). In terms of biological role, synthesizes selenophosphate from selenide and ATP. The sequence is that of Selenide, water dikinase from Porphyromonas gingivalis (strain ATCC 33277 / DSM 20709 / CIP 103683 / JCM 12257 / NCTC 11834 / 2561).